Here is a 542-residue protein sequence, read N- to C-terminus: Chaperonin GroEL (542 aa).

ATP-binding positions include 29–32, 86–90, Gly-413, 476–478, and Asp-492; these read TLGP, DGTTT, and NAA.

This sequence belongs to the chaperonin (HSP60) family. As to quaternary structure, forms a cylinder of 14 subunits composed of two heptameric rings stacked back-to-back. Interacts with the co-chaperonin GroES.

Its subcellular location is the cytoplasm. The catalysed reaction is ATP + H2O + a folded polypeptide = ADP + phosphate + an unfolded polypeptide.. Functionally, together with its co-chaperonin GroES, plays an essential role in assisting protein folding. The GroEL-GroES system forms a nano-cage that allows encapsulation of the non-native substrate proteins and provides a physical environment optimized to promote and accelerate protein folding. This is Chaperonin GroEL from Lactococcus lactis subsp. lactis (strain IL1403) (Streptococcus lactis).